An 88-amino-acid polypeptide reads, in one-letter code: MQAEIHPNYRPVVFLDATTGKKFLSASTVTSNDTTEFEGQEYPVIRMDITSDSHPFYTGKQKFTQADGAVDKFNKKFAGFGFKNNEDK.

Belongs to the bacterial ribosomal protein bL31 family. Type B subfamily. Part of the 50S ribosomal subunit.

The sequence is that of Large ribosomal subunit protein bL31B from Leuconostoc citreum (strain KM20).